Here is a 271-residue protein sequence, read N- to C-terminus: Undecaprenyl-diphosphatase (271 aa).

The next 8 membrane-spanning stretches (helical) occupy residues 5–25 (YALF…FLPV), 45–65 (AATF…AVFW), 86–106 (TLSL…GLAI), 114–134 (LFGP…LIIA), 149–169 (ISYK…WPGF), 189–209 (AAEF…GLDL), 226–246 (VGFI…LALI), and 251–271 (FIPF…VFVA).

The protein belongs to the UppP family.

Its subcellular location is the cell inner membrane. It carries out the reaction di-trans,octa-cis-undecaprenyl diphosphate + H2O = di-trans,octa-cis-undecaprenyl phosphate + phosphate + H(+). In terms of biological role, catalyzes the dephosphorylation of undecaprenyl diphosphate (UPP). Confers resistance to bacitracin. This chain is Undecaprenyl-diphosphatase, found in Aeromonas hydrophila subsp. hydrophila (strain ATCC 7966 / DSM 30187 / BCRC 13018 / CCUG 14551 / JCM 1027 / KCTC 2358 / NCIMB 9240 / NCTC 8049).